Reading from the N-terminus, the 283-residue chain is NAD kinase (283 aa).

Asp-66 acts as the Proton acceptor in catalysis. NAD(+) is bound by residues 66 to 67, 140 to 141, Arg-151, Arg-168, Asp-170, and Gln-240; these read DG and ND.

This sequence belongs to the NAD kinase family. A divalent metal cation is required as a cofactor.

It is found in the cytoplasm. It carries out the reaction NAD(+) + ATP = ADP + NADP(+) + H(+). Functionally, involved in the regulation of the intracellular balance of NAD and NADP, and is a key enzyme in the biosynthesis of NADP. Catalyzes specifically the phosphorylation on 2'-hydroxyl of the adenosine moiety of NAD to yield NADP. The protein is NAD kinase of Syntrophobacter fumaroxidans (strain DSM 10017 / MPOB).